Reading from the N-terminus, the 805-residue chain is H(+)/Cl(-) exchange transporter 7 (805 aa).

Residues 1 to 49 (MANVSKKVSWSGRDRDDEEAAPLLRRTARPGGGTPLLNGAGPGAARQSP) are disordered. Over 1–126 (MANVSKKVSW…TAFRTVEIKR (126 aa)) the chain is Cytoplasmic. Serine 9 and serine 60 each carry phosphoserine. Transmembrane regions (helical) follow at residues 127 to 159 (WVICALIGILTGLVACFIDIVVENLAGLKYRVI) and 174 to 197 (FSLLLWATLNAAFVLVGSVIVAFI). Residues 203–207 (GSGIP) carry the Selectivity filter part_1 motif. Chloride is bound at residue serine 204. An intramembrane region (helical) is located at residues 206–213 (IPQIKCFL). Helical transmembrane passes span 223–241 (RLKTLVIKVSGVILSVVGG) and 247–264 (EGPMIHSGSVIAAGISQG). A Selectivity filter part_2 motif is present at residues 245–249 (GKEGP). Intramembrane regions (helical) lie at residues 288 to 300 (FVSAGAAAGVSAA) and 304 to 312 (PVGGVLFSL). 5 helical membrane passes run 322 to 341 (FLTWRIFFASMISTFTLNFV), 375 to 405 (IPVFIAMGVVGGVLGAVFNALNYWLTMFRIR), 410 to 432 (PCLQVIEAVLVAAVTATVAFVLI), 487 to 507 (PLTLGLFTLVYFFLACWTYGL), and 512 to 535 (GVFIPSLLIGAAWGRLFGISLSYL). The short motif at 512 to 516 (GVFIP) is the Selectivity filter part_3 element. Phenylalanine 514 contributes to the chloride binding site. The helical intramembrane region spans 545 to 559 (GKYALMGAAAQLGGI). The segment at residues 560–562 (VRM) is an intramembrane region (note=Loop between two helices). The segment at residues 563-574 (TLSLTVIMMEAT) is an intramembrane region (helical). The segment at residues 575 to 578 (SNVT) is an intramembrane region (note=Loop between two helices). A helical membrane pass occupies residues 579–597 (YGFPIMLVLMTAKIVGDVF). Topologically, residues 598–805 (IEGLYDMHIQ…GLEELSLAQT (208 aa)) are cytoplasmic. Tyrosine 602 provides a ligand contact to chloride. CBS domains follow at residues 631–695 (MSTP…VFVE) and 741–799 (MNPS…GLEE). ATP contacts are provided by residues 658–660 (HNG) and 783–786 (TRKD). A Phosphoserine modification is found at serine 801.

It belongs to the chloride channel (TC 2.A.49) family. ClC-7/CLCN7 subfamily. Chloride channel 7 are heteromers of alpha (CLCN7) and beta (OSTM1) subunits. In terms of tissue distribution, brain and kidney.

The protein localises to the lysosome membrane. It catalyses the reaction 2 chloride(in) + H(+)(out) = 2 chloride(out) + H(+)(in). Its function is as follows. Slowly voltage-gated channel mediating the exchange of chloride ions against protons. Functions as antiporter and contributes to the acidification of the lysosome lumen and may be involved in maintaining lysosomal pH. The CLC channel family contains both chloride channels and proton-coupled anion transporters that exchange chloride or another anion for protons. The presence of conserved gating glutamate residues is typical for family members that function as antiporters. In Homo sapiens (Human), this protein is H(+)/Cl(-) exchange transporter 7.